A 624-amino-acid polypeptide reads, in one-letter code: uncharacterized protein (624 aa).

Positions 108-138 (PTAWSGMESDSTASERSLPQRTDTTSVSSQY) are disordered. The residue at position 112 (Ser-112) is a Phosphoserine. Residues 115 to 138 (ESDSTASERSLPQRTDTTSVSSQY) are compositionally biased toward polar residues. At Ser-205 the chain carries Phosphoserine. Disordered stretches follow at residues 217-236 (LMES…PGTR) and 305-329 (KREC…PVSE).

This is an uncharacterized protein from Rattus norvegicus (Rat).